We begin with the raw amino-acid sequence, 301 residues long: Ornithine carbamoyltransferase (301 aa).

Carbamoyl phosphate contacts are provided by residues R100 and 127–130 (HPCQ). L-ornithine-binding positions include N158, D221, and 225 to 226 (SM). Residues C260 and R288 each contribute to the carbamoyl phosphate site.

It belongs to the aspartate/ornithine carbamoyltransferase superfamily. OTCase family. Homododecamer.

Its subcellular location is the cytoplasm. The enzyme catalyses carbamoyl phosphate + L-ornithine = L-citrulline + phosphate + H(+). It participates in amino-acid biosynthesis; L-arginine biosynthesis; L-arginine from L-ornithine and carbamoyl phosphate: step 1/3. In terms of biological role, reversibly catalyzes the transfer of the carbamoyl group from carbamoyl phosphate (CP) to the N(epsilon) atom of ornithine (ORN) to produce L-citrulline. This chain is Ornithine carbamoyltransferase (argF), found in Moritella profunda.